Here is a 156-residue protein sequence, read N- to C-terminus: Transcription antitermination protein NusB (156 aa).

The protein belongs to the NusB family.

Its function is as follows. Involved in transcription antitermination. Required for transcription of ribosomal RNA (rRNA) genes. Binds specifically to the boxA antiterminator sequence of the ribosomal RNA (rrn) operons. This is Transcription antitermination protein NusB from Rickettsia akari (strain Hartford).